Consider the following 104-residue polypeptide: Large ribosomal subunit protein uL24 (104 aa).

The protein belongs to the universal ribosomal protein uL24 family. As to quaternary structure, part of the 50S ribosomal subunit.

Its function is as follows. One of two assembly initiator proteins, it binds directly to the 5'-end of the 23S rRNA, where it nucleates assembly of the 50S subunit. In terms of biological role, one of the proteins that surrounds the polypeptide exit tunnel on the outside of the subunit. This is Large ribosomal subunit protein uL24 from Nitrobacter winogradskyi (strain ATCC 25391 / DSM 10237 / CIP 104748 / NCIMB 11846 / Nb-255).